The primary structure comprises 118 residues: Ribonuclease P protein component (118 aa).

The protein belongs to the RnpA family. In terms of assembly, consists of a catalytic RNA component (M1 or rnpB) and a protein subunit.

It catalyses the reaction Endonucleolytic cleavage of RNA, removing 5'-extranucleotides from tRNA precursor.. In terms of biological role, RNaseP catalyzes the removal of the 5'-leader sequence from pre-tRNA to produce the mature 5'-terminus. It can also cleave other RNA substrates such as 4.5S RNA. The protein component plays an auxiliary but essential role in vivo by binding to the 5'-leader sequence and broadening the substrate specificity of the ribozyme. The protein is Ribonuclease P protein component of Mycobacterium sp. (strain KMS).